The chain runs to 2150 residues: Hybrid signal transduction histidine kinase A (2150 aa).

The span at 1-10 (MELKTFKDLN) shows a compositional bias: basic and acidic residues. Disordered regions lie at residues 1–41 (MELK…QQQQ), 68–149 (HIPQ…YYYS), 184–267 (NSSS…HQRR), 286–323 (KNKP…GSLG), 339–359 (TEES…NCGS), 415–505 (NNNN…NSPR), 520–546 (SLTS…GRNG), and 560–733 (KPVV…NGAT). A compositionally biased stretch (polar residues) spans 19-32 (PVINTGDQPNPLRT). Positions 68-81 (HIPQQLYQKQQQQQ) are enriched in low complexity. Residues 82–104 (HSHSYGNHSFIHNVSPTSPSYDI) show a composition bias toward polar residues. Composition is skewed to low complexity over residues 105 to 145 (NNNN…YNNN) and 184 to 244 (NSSS…NNNI). Positions 289–304 (PLSSSTPSTVNTCGAV) are enriched in polar residues. Composition is skewed to low complexity over residues 305–318 (NNNS…NNNS), 344–359 (GGNN…NCGS), and 415–447 (NNNN…HNIS). A compositionally biased stretch (polar residues) spans 448 to 468 (PRGSNISPRSNNGGSTTISPR). 3 stretches are compositionally biased toward low complexity: residues 469–485 (NISN…NNNI), 520–545 (SLTS…NGRN), and 565–600 (NNGN…INNN). Residues 614–628 (SKTNSLQDFETSSMN) are compositionally biased toward polar residues. Low complexity predominate over residues 657-727 (NSNNTNSNNS…NNNNNNNNNN (71 aa)). A helical transmembrane segment spans residues 772 to 792 (AIILGLFIVGSSISILATLVL). In terms of domain architecture, CHASE spans 838–1082 (STSEDQFVPF…NVGGRNWMIA (245 aa)). A helical transmembrane segment spans residues 1098-1118 (PYAIGGVCMLLSALVSFWFAV). A coiled-coil region spans residues 1139–1164 (NRKLAEKALAESQERLELAMEGSEDA). Disordered regions lie at residues 1209-1228 (LNFK…FNLF) and 1233-1252 (VDSS…GGGG). Residues 1235–1317 (SSSPQSITNV…SEIKKTITRE (83 aa)) form the PAS domain. Residues 1321 to 1376 (MEIECRMRKKYGGYLYIIMRGKVVSNETSFKDNSLRMAGTLRDMTSRKDMQRLILE) enclose the PAC domain. The region spanning 1393–1620 (TVSHEVRTPL…KFKCIIPFLL (228 aa)) is the Histidine kinase domain. Histidine 1396 is modified (phosphohistidine; by autocatalysis). Disordered regions lie at residues 1874–1893 (GGGS…NNNF), 1933–1952 (HGNQ…NNSS), and 1962–2017 (QNNN…DTPV). Low complexity-rich tracts occupy residues 1878–1893 (NTMN…NNNF), 1935–1952 (NQQQ…NNSS), and 1962–2002 (QNNN…TPTL). A Response regulatory domain is found at 2026–2146 (KALIVEDNEL…TLKDALAKWG (121 aa)). The residue at position 2076 (aspartate 2076) is a 4-aspartylphosphate.

In terms of assembly, interacts with SDF-2, an acbA peptide involved in sporulation.

The protein resides in the cell membrane. The enzyme catalyses ATP + protein L-histidine = ADP + protein N-phospho-L-histidine.. Acts as a receptor histidine kinase for the cytokinin SDF-2 in a signal transduction pathway that regulates prestalk gene expression and controls terminal differentiation of prespore cells. Binding of SDF-2 to this protein inhibits phosphorelay and induces rapid sporulation. This protein undergoes an ATP-dependent autophosphorylation at a conserved histidine residue in the kinase core, and a phosphoryl group is then transferred to a conserved aspartate residue in the receiver domain. The polypeptide is Hybrid signal transduction histidine kinase A (dhkA) (Dictyostelium discoideum (Social amoeba)).